A 423-amino-acid polypeptide reads, in one-letter code: Galactosylceramide sulfotransferase (423 aa).

Residues 1-14 (MLPPQKKPWESMAK) lie on the Cytoplasmic side of the membrane. A helical; Signal-anchor for type II membrane protein membrane pass occupies residues 15 to 35 (GLVLGALFTSFLLLVYSYAVP). Over 36–423 (PLHAGLASTT…WKFIRDFLRW (388 aa)) the chain is Lumenal. N-linked (GlcNAc...) asparagine glycosylation is found at Asn66 and Asn312.

The protein belongs to the galactose-3-O-sulfotransferase family. Expressed in kidney proximal tubule, gastric mucosa and adenocarcinoma. Highly expressed in renal cell carcinoma cell lines.

Its subcellular location is the golgi apparatus membrane. It carries out the reaction a beta-D-galactosyl-(1&lt;-&gt;1')-N-acylsphing-4-enine + 3'-phosphoadenylyl sulfate = an N-acyl-1-beta-D-(3-O-sulfo)-galactosyl-sphing-4-enine + adenosine 3',5'-bisphosphate + H(+). The catalysed reaction is a 1-O-alkyl-2-acyl-3-O-(beta-D-galactosyl)-sn-glycerol + 3'-phosphoadenylyl sulfate = a 1-O-alkyl-2-acyl-3-(beta-D-3-sulfogalactosyl)-sn-glycerol + adenosine 3',5'-bisphosphate + H(+). It catalyses the reaction a beta-D-Gal-(1&lt;-&gt;1')-ceramide + 3'-phosphoadenylyl sulfate = 1-(3-O-sulfo-beta-D-galactosyl)-ceramide + adenosine 3',5'-bisphosphate + H(+). The enzyme catalyses a 1,2-diacyl-3-O-(beta-D-galactosyl)-sn-glycerol + 3'-phosphoadenylyl sulfate = 1,2-diacyl-3-(3-O-sulfo-beta-D-galactosyl)-sn-glycerol + adenosine 3',5'-bisphosphate + H(+). It carries out the reaction a beta-D-Gal-(1-&gt;4)-beta-D-Glc-(1&lt;-&gt;1)-Cer(d18:1(4E)) + 3'-phosphoadenylyl sulfate = beta-D-3-sulfogalactosyl-(1-&gt;4)-beta-D-glucosyl-(1&lt;-&gt;1')-N-acylsphing-4-enine + adenosine 3',5'-bisphosphate + H(+). Its pathway is lipid metabolism; sphingolipid metabolism. Its function is as follows. Catalyzes the transfer of a sulfate group to position 3 of non-reducing beta-galactosyl residues in glycerolipids and sphingolipids, therefore participates in the biosynthesis of sulfoglycolipids. Catalyzes the synthesis of galactosylceramide sulfate (sulfatide), a major lipid component of the myelin sheath and of monogalactosylalkylacylglycerol sulfate (seminolipid), present in spermatocytes. Seems to prefer beta-glycosides at the non-reducing termini of sugar chains attached to a lipid moiety. Also acts on lactosylceramide, galactosyl 1-alkyl-2-sn-glycerol and galactosyl diacylglycerol (in vitro). The polypeptide is Galactosylceramide sulfotransferase (Homo sapiens (Human)).